A 569-amino-acid chain; its full sequence is BICD family-like cargo adapter 1 (569 aa).

The segment at 1–36 is disordered; it reads MSASCLDLISAPPQPDSDRMDRALNPGRQNSPDTAG. The CC1 box signature appears at 97–101; the sequence is AAKLG. Residues 102 to 283 adopt a coiled-coil conformation; the sequence is KALLERNQDL…TLELEKHCHH (182 aa). The segment at 385 to 405 is disordered; it reads ALSTDSSMDESSETLSAKDVP. Residues 458 to 520 adopt a coiled-coil conformation; it reads NEQLQSAIRD…LEAWQDDMHR (63 aa). Positions 533–554 are disordered; the sequence is EWKDPPFSFSRRGAAASRPTQR.

It belongs to the BICDR family. In terms of assembly, part of a tripartite complex with dynein and dynactin, acts an adapter linking the dynein motor complex and dynactin. In terms of tissue distribution, highly expressed in developing neural tissues and developing eye.

It localises to the cytoplasm. The protein localises to the cytoskeleton. The protein resides in the microtubule organizing center. It is found in the centrosome. Acts as an adapter protein linking the dynein motor complex to various cargos and converts dynein from a non-processive to a highly processive motor in the presence of dynactin. Facilitates the interaction between dynein and dynactin and activates dynein processivity (the ability to move along a microtubule for a long distance without falling off the track). Predominantly recruits 2 dyneins, which increases both the force and speed of the microtubule motor. Component of secretory vesicle machinery in developing neurons that acts as a regulator of neurite outgrowth. Regulates the secretory vesicle transport by controlling the accumulation of Rab6-containing secretory vesicles in the pericentrosomal region restricting anterograde secretory transport during the early phase of neuronal differentiation, thereby inhibiting neuritogenesis. The polypeptide is BICD family-like cargo adapter 1 (bicdl1) (Danio rerio (Zebrafish)).